Reading from the N-terminus, the 142-residue chain is Large ribosomal subunit protein uL13 (142 aa).

This sequence belongs to the universal ribosomal protein uL13 family. Part of the 50S ribosomal subunit.

In terms of biological role, this protein is one of the early assembly proteins of the 50S ribosomal subunit, although it is not seen to bind rRNA by itself. It is important during the early stages of 50S assembly. The sequence is that of Large ribosomal subunit protein uL13 from Vibrio campbellii (strain ATCC BAA-1116).